Reading from the N-terminus, the 206-residue chain is 2-phospho-L-lactate guanylyltransferase (206 aa).

Belongs to the CofC family. Homodimer.

The enzyme catalyses (2S)-2-phospholactate + GTP + H(+) = (2S)-lactyl-2-diphospho-5'-guanosine + diphosphate. Its pathway is cofactor biosynthesis; coenzyme F420 biosynthesis. In terms of biological role, guanylyltransferase that catalyzes the activation of (2S)-2-phospholactate (2-PL) as (2S)-lactyl-2-diphospho-5'-guanosine, via the condensation of 2-PL with GTP. It is involved in the biosynthesis of coenzyme F420, a hydride carrier cofactor. This is 2-phospho-L-lactate guanylyltransferase from Haloferax volcanii (strain ATCC 29605 / DSM 3757 / JCM 8879 / NBRC 14742 / NCIMB 2012 / VKM B-1768 / DS2) (Halobacterium volcanii).